Consider the following 230-residue polypeptide: uncharacterized protein (230 aa).

The disordered stretch occupies residues 118–195; it reads LLDEILPKEP…SKREMERLER (78 aa). A compositionally biased stretch (basic residues) spans 136–146; the sequence is QKKKEKRAALK. Basic and acidic residues-rich tracts occupy residues 160–170 and 179–195; these read ETDLYGDRDSF and QRSE…RLER.

This is an uncharacterized protein from Schizosaccharomyces pombe (strain 972 / ATCC 24843) (Fission yeast).